The primary structure comprises 137 residues: Small ribosomal subunit protein uS11 (137 aa).

Disordered regions lie at residues 1 to 31 and 117 to 137; these read MPPKSRGTGPKKTQKARRRDKKNVPHGAAHI and TISDVTPQPHNGCRPPKRRRV. Residues 12–21 show a composition bias toward basic residues; it reads KTQKARRRDK.

The protein belongs to the universal ribosomal protein uS11 family. Part of the 30S ribosomal subunit. Interacts with proteins S7 and S18. Binds to IF-3.

Located on the platform of the 30S subunit, it bridges several disparate RNA helices of the 16S rRNA. Forms part of the Shine-Dalgarno cleft in the 70S ribosome. In Rhodococcus jostii (strain RHA1), this protein is Small ribosomal subunit protein uS11.